The sequence spans 263 residues: MADAAQQRTLATAFAPPPPLWKHFTPDNLKRLEEIKKEASKGEDGKPQKKKWSPAELRALDLPPELRLLVPPAIPDTGHYSVFGELQNLSTALPSLKDQGITQLYPSSSPADTDRQSPSEPSRPLNHAYYLLKISKSLLLNFLEFVGVLSVSPEQFESKVEDLRNLFINAHHLLNLYRPHQARESLIMMMEEQLSRTKEEIQQMDKLKAEITGVLERLEADGIAAQSHPQQTDEDGRKESETSQKTIEDAQLVWDLLDGKIEG.

The span at 1–10 shows a compositional bias: polar residues; sequence MADAAQQRTL. 3 disordered regions span residues 1-57, 101-122, and 222-247; these read MADA…PAEL, ITQLYPSSSPADTDRQSPSEPS, and GIAAQSHPQQTDEDGRKESETSQKTI. The span at 24–47 shows a compositional bias: basic and acidic residues; sequence FTPDNLKRLEEIKKEASKGEDGKP. Positions 101-111 are enriched in polar residues; it reads ITQLYPSSSPA. The segment covering 234 to 247 has biased composition (basic and acidic residues); it reads EDGRKESETSQKTI.

The protein belongs to the Mediator complex subunit 7 family. In terms of assembly, component of the Mediator complex.

It localises to the nucleus. In terms of biological role, component of the Mediator complex, a coactivator involved in the regulated transcription of nearly all RNA polymerase II-dependent genes. Mediator functions as a bridge to convey information from gene-specific regulatory proteins to the basal RNA polymerase II transcription machinery. Mediator is recruited to promoters by direct interactions with regulatory proteins and serves as a scaffold for the assembly of a functional preinitiation complex with RNA polymerase II and the general transcription factors. This is Mediator of RNA polymerase II transcription subunit 7 (med7) from Aspergillus niger (strain ATCC MYA-4892 / CBS 513.88 / FGSC A1513).